The primary structure comprises 636 residues: Plasma kallikrein (636 aa).

Residues 1–19 (MIALRQAAYFICLFATVSC) form the signal peptide. 4 consecutive Apple domains span residues 21 to 104 (CLTQ…LKRC), 111 to 194 (CHRS…LKAC), 201 to 284 (CRVD…LLTC), and 294 to 377 (CHSK…LRLC). Intrachain disulfides connect Cys21/Cys104, Cys47/Cys77, Cys51/Cys57, Cys111/Cys194, Cys137/Cys166, Cys141/Cys147, Cys201/Cys284, Cys227/Cys256, Cys231/Cys237, Cys294/Cys377, Cys320/Cys349, and Cys324/Cys330. Residues Asn66 and Asn127 are each glycosylated (N-linked (GlcNAc...) asparagine). Residues Asn361 and Asn397 are each glycosylated (N-linked (GlcNAc...) asparagine). The region spanning 392–627 (IVGGTNASWG…YVDWILEKTQ (236 aa)) is the Peptidase S1 domain. A disulfide bridge links Cys420 with Cys436. His435 (charge relay system) is an active-site residue. A glycan (N-linked (GlcNAc...) asparagine) is linked at Asn454. Asp484 acts as the Charge relay system in catalysis. N-linked (GlcNAc...) asparagine glycosylation occurs at Asn495. Cystine bridges form between Cys518–Cys585, Cys549–Cys564, and Cys575–Cys603. The active-site Charge relay system is the Ser579.

It belongs to the peptidase S1 family. Plasma kallikrein subfamily. Forms a heterodimer with SERPINA5. The zymogen is activated by factor XIIa, which cleaves the molecule into a light chain, which contains the active site, and a heavy chain, which associates with HMW kininogen. These chains are linked by one or more disulfide bonds.

The protein localises to the secreted. It carries out the reaction Cleaves selectively Arg-|-Xaa and Lys-|-Xaa bonds, including Lys-|-Arg and Arg-|-Ser bonds in (human) kininogen to release bradykinin.. With respect to regulation, inhibited by SERPINA5. Its function is as follows. The enzyme cleaves Lys-Arg and Arg-Ser bonds. It activates, in a reciprocal reaction, factor XII after its binding to a negatively charged surface. It also releases bradykinin from HMW kininogen and may also play a role in the renin-angiotensin system by converting prorenin into renin. In Bos taurus (Bovine), this protein is Plasma kallikrein (KLKB1).